Consider the following 609-residue polypeptide: Wee1-like protein kinase (609 aa).

Residues 1–10 show a composition bias toward basic and acidic residues; that stretch reads MAFRQSEHEM. 2 disordered regions span residues 1–88 and 147–166; these read MAFR…SMSP and PLHN…PFTP. Phosphoserine occurs at positions 23, 25, and 27. Residues 37-48 are compositionally biased toward basic and acidic residues; the sequence is RFADDDFDKDTP. A Phosphothreonine modification is found at threonine 47. Residue serine 52 is modified to Phosphoserine. Over residues 153-165 the composition is skewed to polar residues; sequence LPTQDTANVNPFT. Position 165 is a phosphothreonine (threonine 165). Serine 168 is modified (phosphoserine). The Protein kinase domain occupies 239–517; it reads FMQVNVIGVG…SQSIFSHPIL (279 aa). ATP-binding positions include 245 to 253 and lysine 268; that span reads IGVGEFGVV. The Proton acceptor role is filled by aspartate 361. Asparagine 366 and aspartate 412 together coordinate Mg(2+).

The protein belongs to the protein kinase superfamily. Ser/Thr protein kinase family. WEE1 subfamily. Requires Mg(2+) as cofactor. Post-translationally, phosphorylated during M and G1 phases. Expressed in embryos; expression remains high in the proliferating cells of the central nervous system well after cells in the rest of the embryo have ceased dividing.

Its subcellular location is the nucleus. The enzyme catalyses L-tyrosyl-[protein] + ATP = O-phospho-L-tyrosyl-[protein] + ADP + H(+). Negatively regulated by phosphorylation in the M-phase. In terms of biological role, acts as a negative regulator of entry into mitosis (G2 to M transition). This kinase specifically phosphorylates and inactivates cyclin B1-complexed CDC2. The protein is Wee1-like protein kinase of Drosophila melanogaster (Fruit fly).